The chain runs to 118 residues: uncharacterized protein (118 aa).

This is an uncharacterized protein from Kitasatospora aureofaciens (Streptomyces aureofaciens).